The chain runs to 950 residues: MVFTPEDRLGKQCLLLPLLLLAAWKVGSGQLHYSVPEEAKHGTFVGRIAQDLGLELAELVPRLFRMASKDREDLLEVNLQNGILFVNSRIDREELCGRSAECSIHLEVIVDRPLQVFHVDVEVRDINDNPPLFPVEEQRVLIYESRLPDSVFPLEGASDADVGSNSILTYKLSSSEYFGLDVKINSDDNKQIGLLLKKSLDREEAPAHNLFLTATDGGKPELTGTVQLLVTVLDVNDNAPNFEQSEYEVRIFENADNGTTVIKLNASDRDEGANGAISYSFNSLVAAMVIDHFSIDRNTGEIVIRGNLDFEQENFYKIRIDATDKGHPPMAGHCTVLVRILDKNDNVPEIALTSLSLPVREDAQFGTVIALISVNDLDSGANGQVNCSLTPHVPFKLVSTFKNYYSLVLDSALDRESVSAYELVVTARDGGSPSLWATASLSVEVADVNDNAPAFAQPEYTVFVKENNPPGCHIFTVSARDADAQENALVSYSLVERRVGERALSSYISVHAESGKVYALQPLDHEELELLQFQVSARDAGVPPLGSNVTLQVFVLDENDNAPALLAPRVGGTGGAVSELVPRSVGAGQVVAKVRAVDADSGYNAWLSYELQPPASSARFPFRVGLYTGEISTTRVLDEADSPRHRLLVLVKDHGEPALTATATVLVSLVESGQAPKASSRASVGAAGPEAALVDVNVYLIIAICAVSSLLVLTLLLYTALRCSAPSTEGACTADKPTLVCSSAVGSWSYSQQRRQRVCSGEGPPKMDLMAFSPSLSPCPIMMGKAENQDLNEDHDAKPRQPNPDWRYSASLRAGMHSSVHLEEAGILRAGPGGPDQQWPTVSSATPEPEAGEVSPPVGAGVNSNSWTFKYGPGNPKQSGPGELPDKFIIPGSPAIISIRQEPANSQIDKSDFITFGKKEETKKKKKKKKGNKTQEKKEKGNSTTDNSDQ.

A signal peptide spans 1–29 (MVFTPEDRLGKQCLLLPLLLLAAWKVGSG). Over 30–697 (QLHYSVPEEA…GPEAALVDVN (668 aa)) the chain is Extracellular. Cadherin domains lie at 34-133 (SVPE…PPLF), 157-242 (ASDA…APNF), 243-350 (EQSE…VPEI), 351-455 (ALTS…APAF), 456-565 (AQPE…APAL), and 581-678 (VPRS…APKA). 4 N-linked (GlcNAc...) asparagine glycosylation sites follow: Asn257, Asn265, Asn386, and Asn548. A helical membrane pass occupies residues 698-718 (VYLIIAICAVSSLLVLTLLLY). Residues 719–950 (TALRCSAPST…GNSTTDNSDQ (232 aa)) lie on the Cytoplasmic side of the membrane. PXXP repeat units follow at residues 799-802 (PRQP), 832-835 (PGGP), 873-876 (PGNP), and 891-894 (PGSP). Residues 799–894 (PRQPNPDWRY…PDKFIIPGSP (96 aa)) form a 4 X 4 AA repeats of P-X-X-P region. Positions 830-889 (AGPGGPDQQWPTVSSATPEPEAGEVSPPVGAGVNSNSWTFKYGPGNPKQSGPGELPDKFI) are disordered. Residues 901 to 950 (QEPANSQIDKSDFITFGKKEETKKKKKKKKGNKTQEKKEKGNSTTDNSDQ) are disordered. A compositionally biased stretch (basic and acidic residues) spans 909–923 (DKSDFITFGKKEETK).

The protein localises to the cell membrane. Potential calcium-dependent cell-adhesion protein. May be involved in the establishment and maintenance of specific neuronal connections in the brain. The chain is Protocadherin alpha-6 (PCDHA6) from Pan troglodytes (Chimpanzee).